A 367-amino-acid polypeptide reads, in one-letter code: Glutamate 5-kinase (367 aa).

Lys10 is a binding site for ATP. Residues Ser50, Asp137, and Asn149 each contribute to the substrate site. ATP-binding positions include 169 to 170 and 211 to 217; these read TD and TGGMGTK. Positions 275 to 353 constitute a PUA domain; it reads AGEITVDDGA…QEISEILGYE (79 aa).

The protein belongs to the glutamate 5-kinase family.

The protein resides in the cytoplasm. The enzyme catalyses L-glutamate + ATP = L-glutamyl 5-phosphate + ADP. Its pathway is amino-acid biosynthesis; L-proline biosynthesis; L-glutamate 5-semialdehyde from L-glutamate: step 1/2. With respect to regulation, proline-mediated feedback inhibition. Its function is as follows. Catalyzes the transfer of a phosphate group to glutamate to form L-glutamate 5-phosphate. The chain is Glutamate 5-kinase from Serratia marcescens.